Here is a 241-residue protein sequence, read N- to C-terminus: 3-oxoacyl-[acyl-carrier-protein] reductase FabG (241 aa).

Residues 13–16, serine 38, 57–58, and asparagine 83 each bind NADP(+); these read GASG and EV. Serine 135 contacts substrate. Catalysis depends on tyrosine 148, which acts as the Proton acceptor. NADP(+) is bound by residues 148–152 and isoleucine 181; that span reads YCASK.

This sequence belongs to the short-chain dehydrogenases/reductases (SDR) family. Homotetramer.

The enzyme catalyses a (3R)-hydroxyacyl-[ACP] + NADP(+) = a 3-oxoacyl-[ACP] + NADPH + H(+). It participates in lipid metabolism; fatty acid biosynthesis. In terms of biological role, catalyzes the NADPH-dependent reduction of beta-ketoacyl-ACP substrates to beta-hydroxyacyl-ACP products, the first reductive step in the elongation cycle of fatty acid biosynthesis. This Rickettsia conorii (strain ATCC VR-613 / Malish 7) protein is 3-oxoacyl-[acyl-carrier-protein] reductase FabG (fabG).